Here is a 1097-residue protein sequence, read N- to C-terminus: Importin-5 (1097 aa).

N-acetylalanine is present on Ala2. HEAT repeat units lie at residues Ala5 to Gly38, Thr43 to Val77, Met95 to Asp122, Pro130 to Asn157, Gln167 to Ile201, Leu210 to Thr246, His254 to Thr289, Thr298 to Leu350, Gly352 to Gly386, His390 to Phe430, Pro432 to Asp472, Lys475 to Ala523, Glu525 to Val568, Lys570 to Leu615, Lys617 to Leu692, Gly695 to Arg737, Tyr741 to Met780, Asn787 to Tyr853, Lys856 to Cys895, Ala903 to Tyr935, Phe943 to Lys983, Glu990 to Glu1021, Asn1032 to Gln1067, and Thr1070 to Leu1093. The 72-residue stretch at Gln28–Met99 folds into the Importin N-terminal domain. Residues Asp325–Arg375 form a ran-GTP binding region. The residue at position 827 (Ser827) is a Phosphoserine.

The protein belongs to the importin beta family. Importin beta-3 subfamily. In terms of assembly, interacts with RPS7 and RPL5. Interacts with RPL23A (via BIB domain). Interacts with H2A, H2B, H3 and H4 histones. Interacts with CPEB3; this mediates CPEB3 nuclear import following neuronal stimulation which enhances the interaction in a RAN-regulated manner. Interacts with AIFM2; this interaction likely mediates the translocation of AIFM2 into the nucleus upon oxidative stress. Interacts with STX3 (isoform 3). Interacts with SRP19. (Microbial infection) Interacts with HIV-1 Rev.

It localises to the cytoplasm. Its subcellular location is the nucleus. It is found in the nucleolus. Functionally, functions in nuclear protein import as nuclear transport receptor. Serves as receptor for nuclear localization signals (NLS) in cargo substrates. Is thought to mediate docking of the importin/substrate complex to the nuclear pore complex (NPC) through binding to nucleoporin and the complex is subsequently translocated through the pore by an energy requiring, Ran-dependent mechanism. At the nucleoplasmic side of the NPC, Ran binds to the importin, the importin/substrate complex dissociates and importin is re-exported from the nucleus to the cytoplasm where GTP hydrolysis releases Ran. The directionality of nuclear import is thought to be conferred by an asymmetric distribution of the GTP- and GDP-bound forms of Ran between the cytoplasm and nucleus. Mediates the nuclear import of ribosomal proteins RPL23A, RPS7 and RPL5. In vitro, mediates nuclear import of H2A, H2B, H3 and H4 histones. Binds to CPEB3 and mediates its nuclear import following neuronal stimulation. In case of HIV-1 infection, binds and mediates the nuclear import of HIV-1 Rev. This is Importin-5 (IPO5) from Homo sapiens (Human).